The primary structure comprises 577 residues: MALNGPGVYHRTREHEQEDASDITKNILAESWKSWPNEAAFDRLEEHRGPLRLTLKGTIPSWAAGSLYRTGPGQSRVEDTARGTHFTTHWFDGFAQTHRFDIIPSEDGETQVWYSSRRQADEWIADVKKKGWRSGMTFGQKADPCVGIFAKVMTVFEPKLGNHNVALLANVPGVPKDEETEVSNGVPGPLGHRVNTSNLFVSTDYTGIRRIDPSTLQPLAETTQYDLHPSLSGPCSCSHAQRDPDSGDLFNFNLAFGRVPTYRIFRVDTASGETEVLATISDLNVPPAYMHSFFLTENHVVICIPASHYAWRGLKTQWEGNIIDSMKPFDKERKCKWLVVDRRHGKGLVATFSTPAAFFFHSINAFEKNIEDEDGTEQTDLFFDLAKYNNMDIIKGFYYDVLMDRDDATKKYWFKNDRYKNCAPTLTRYRFRLPSAPTPDTTFSASAEQVLAIPSPHAGELPTIHPLRNGKPYRYVYSASLRGLTTSVDALVKTDLDTSEAFIWTGPEGHTPGEPVFVPRPGAEAEDDGIVFSLVVDGVNEKAYILCLNGKTMEELGRAEADFAIGQGFHGIHLPAA.

The segment at M1–A20 is disordered. 4 residues coordinate Fe(2+): H239, H291, H361, and H570.

The protein belongs to the carotenoid oxygenase family. It depends on Fe(2+) as a cofactor.

The protein resides in the cytoplasm. It is found in the cytosol. It carries out the reaction torulene + O2 = 4'-apo-beta-carotenal + 3-methyl-2-butenal. It participates in carotenoid biosynthesis. Functionally, torulene dioxygenase; part of pathway that mediates the biosynthesis of neurosporaxanthin, a carboxylic apocarotenoid acting as an essential protective pigments and leading to orange pigmentation. CarT mediates the cleavage of torulene into beta-apo-4'-carotenal, the aldehyde corresponding to the acidic neurosporaxanthin. Is also active on other monocyclic synthetic substrates such as beta-apo-8'-carotenal and beta-apo-10'-carotenal to produce beta-apo-14'-carotenal and retinal(beta-apo-15'-carotenal), respectively. Neurosporaxanthin is synthesized from geranyl-geranyl pyrophosphate (GGPP) through several enzymatic activities. Phytoene synthase activity performed by the bifunctional enzyme carAR first produces phytoene from geranyl-geranyl pyrophosphate (GGPP). The phytoene dehydrogenase carB then introduces 4 desaturations to lead to lycopene which is substrate of the carotene cyclase activity of carAR that leads to the production of gamma-carotene. CarB then performs a 5th desaturation reaction to yield torulene. Torulene is the substrate of the dioxidase carT that breaks the molecule, removing five carbon atoms to yield beta-apo-4'-carotenal, whereas the aldehyde dehydrogenase carD mediates the last step by converting beta-apo-4'-carotenal into neurosporaxanthin. This Gibberella fujikuroi (strain CBS 195.34 / IMI 58289 / NRRL A-6831) (Bakanae and foot rot disease fungus) protein is Torulene dioxygenase.